Here is an 87-residue protein sequence, read N- to C-terminus: Small ribosomal subunit protein bS20 (87 aa).

Residues 1 to 25 are disordered; that stretch reads MANSAQARKRARQNISHRNRNMSLR. Residues 7 to 20 are compositionally biased toward basic residues; it reads ARKRARQNISHRNR.

It belongs to the bacterial ribosomal protein bS20 family.

In terms of biological role, binds directly to 16S ribosomal RNA. The chain is Small ribosomal subunit protein bS20 from Nitrosospira multiformis (strain ATCC 25196 / NCIMB 11849 / C 71).